The sequence spans 272 residues: MTLQEQIMKALHVQPVIDPKVEIRKRVDFLKDYVKKTGAKGFVLGISGGQDSTLAGRLAQLAVEEIRNEGGNATFIAVRLPYKVQKDEDDAQLALQFIQADQSTAFDIASTVDAFSNQYENLLGESLTDFNKGNVKARIRMVTQYAIGGQKGLLVIGTDHAAEAVTGFFTKFGDGGADLLPLTGLTKRQGRALLQELGADERLYLKMPTADLLDEKPGQADETELGITYDQLDDYLEGKAVPADVAEKIEKRYTVSEHKRQVPASMFDDWWK.

45 to 52 (GISGGQDS) contributes to the ATP binding site. Residue aspartate 51 coordinates Mg(2+). Position 138 (arginine 138) interacts with deamido-NAD(+). ATP is bound at residue threonine 158. Glutamate 163 provides a ligand contact to Mg(2+). Residues lysine 171 and aspartate 178 each coordinate deamido-NAD(+). Residues lysine 187 and threonine 209 each contribute to the ATP site. 258–259 (HK) serves as a coordination point for deamido-NAD(+).

This sequence belongs to the NAD synthetase family. In terms of assembly, homodimer.

The enzyme catalyses deamido-NAD(+) + NH4(+) + ATP = AMP + diphosphate + NAD(+) + H(+). The protein operates within cofactor biosynthesis; NAD(+) biosynthesis; NAD(+) from deamido-NAD(+) (ammonia route): step 1/1. Its function is as follows. Catalyzes the ATP-dependent amidation of deamido-NAD to form NAD. Uses ammonia as a nitrogen source. This is NH(3)-dependent NAD(+) synthetase from Bacillus cereus (strain G9842).